Consider the following 231-residue polypeptide: Orotate phosphoribosyltransferase (231 aa).

5-phospho-alpha-D-ribose 1-diphosphate contacts are provided by residues Lys27, 79–80, Arg106, Lys107, Lys110, His112, and 133–141; these read YK and DDVMTAGTA. Orotate contacts are provided by Thr137 and Arg166.

The protein belongs to the purine/pyrimidine phosphoribosyltransferase family. PyrE subfamily. In terms of assembly, homodimer. Mg(2+) serves as cofactor.

The enzyme catalyses orotidine 5'-phosphate + diphosphate = orotate + 5-phospho-alpha-D-ribose 1-diphosphate. The protein operates within pyrimidine metabolism; UMP biosynthesis via de novo pathway; UMP from orotate: step 1/2. Functionally, catalyzes the transfer of a ribosyl phosphate group from 5-phosphoribose 1-diphosphate to orotate, leading to the formation of orotidine monophosphate (OMP). The polypeptide is Orotate phosphoribosyltransferase (Bifidobacterium animalis subsp. lactis (strain AD011)).